Consider the following 170-residue polypeptide: Protein-lysine myristoyltransferase HlyC (170 aa).

Histidine 23 is an active-site residue. Heme is bound at residue histidine 151.

Belongs to the RTX toxin acyltransferase family. Monomer. In terms of processing, proteolytically cleaved by the protease systems ClpAP, ClpXP and FtsH, leading to its degradation.

The protein localises to the cytoplasm. The catalysed reaction is tetradecanoyl-[ACP] + L-lysyl-[protein] = N(6)-tetradecanoyl-L-lysyl-[protein] + holo-[ACP] + H(+). Its activity is regulated as follows. The acyltransferase activity is inhibited by heme. In terms of biological role, protein-lysine myristoyltransferase that catalyzes myristoylation of the protoxin (HlyA) at two internal lysine residues, thereby converting it to the active toxin. The chain is Protein-lysine myristoyltransferase HlyC from Escherichia coli.